A 556-amino-acid chain; its full sequence is ATP synthase subunit beta-1, mitochondrial (556 aa).

Residues 1–20 (MASRRVLSSLLRSSSGRSAA) show a composition bias toward low complexity. Residues 1-37 (MASRRVLSSLLRSSSGRSAAKLGNRNPRLPSPSPARH) are disordered. The N-terminal 51 residues, 1 to 51 (MASRRVLSSLLRSSSGRSAAKLGNRNPRLPSPSPARHAAPCSYLLGRVAEY), are a transit peptide targeting the mitochondrion. Ser59 is modified (phosphoserine). 231–238 (GGAGVGKT) serves as a coordination point for ATP.

Belongs to the ATPase alpha/beta chains family. F-type ATPases have 2 components, CF(1) - the catalytic core - and CF(0) - the membrane proton channel. CF(1) has five subunits: alpha(3), beta(3), gamma(1), delta(1), epsilon(1). CF(0) has three main subunits: a, b and c.

The protein resides in the mitochondrion. The protein localises to the mitochondrion inner membrane. It carries out the reaction ATP + H2O + 4 H(+)(in) = ADP + phosphate + 5 H(+)(out). Functionally, mitochondrial membrane ATP synthase (F(1)F(0) ATP synthase or Complex V) produces ATP from ADP in the presence of a proton gradient across the membrane which is generated by electron transport complexes of the respiratory chain. F-type ATPases consist of two structural domains, F(1) - containing the extramembraneous catalytic core, and F(0) - containing the membrane proton channel, linked together by a central stalk and a peripheral stalk. During catalysis, ATP synthesis in the catalytic domain of F(1) is coupled via a rotary mechanism of the central stalk subunits to proton translocation. Subunits alpha and beta form the catalytic core in F(1). Rotation of the central stalk against the surrounding alpha(3)beta(3) subunits leads to hydrolysis of ATP in three separate catalytic sites on the beta subunits. This Arabidopsis thaliana (Mouse-ear cress) protein is ATP synthase subunit beta-1, mitochondrial.